A 366-amino-acid chain; its full sequence is Chorismate synthase (366 aa).

The NADP(+) site is built by R48 and R54. FMN-binding positions include 132–134 (RSS), 244–245 (NA), G289, 304–308 (KPTSS), and R330.

It belongs to the chorismate synthase family. In terms of assembly, homotetramer. The cofactor is FMNH2.

It catalyses the reaction 5-O-(1-carboxyvinyl)-3-phosphoshikimate = chorismate + phosphate. Its pathway is metabolic intermediate biosynthesis; chorismate biosynthesis; chorismate from D-erythrose 4-phosphate and phosphoenolpyruvate: step 7/7. Its function is as follows. Catalyzes the anti-1,4-elimination of the C-3 phosphate and the C-6 proR hydrogen from 5-enolpyruvylshikimate-3-phosphate (EPSP) to yield chorismate, which is the branch point compound that serves as the starting substrate for the three terminal pathways of aromatic amino acid biosynthesis. This reaction introduces a second double bond into the aromatic ring system. The protein is Chorismate synthase of Methylorubrum populi (strain ATCC BAA-705 / NCIMB 13946 / BJ001) (Methylobacterium populi).